A 111-amino-acid polypeptide reads, in one-letter code: Ig kappa chain V-III region PC 2413 (111 aa).

Positions 1–23 (DIVLTQSPASLAVSLGQRATISC) are framework-1. A disulfide bridge links cysteine 23 with cysteine 92. Residues 24–38 (RASESVVNYGVSLMH) form a complementarity-determining-1 region. Residues 39 to 53 (WFQQKPGQPPKLLIY) form a framework-2 region. Residues 54–60 (GASNRGS) form a complementarity-determining-2 region. The framework-3 stretch occupies residues 61 to 92 (GVPARFSGSGSGTDFSLIIHPMEEDDSAMYFC). Residues 93–101 (HQTKEVPWT) are complementarity-determining-3. The tract at residues 102–111 (FGGGTDLEIE) is framework-4.

The polypeptide is Ig kappa chain V-III region PC 2413 (Mus musculus (Mouse)).